The following is a 117-amino-acid chain: Large ribosomal subunit protein uL18 (117 aa).

This sequence belongs to the universal ribosomal protein uL18 family. As to quaternary structure, part of the 50S ribosomal subunit; part of the 5S rRNA/L5/L18/L25 subcomplex. Contacts the 5S and 23S rRNAs.

Its function is as follows. This is one of the proteins that bind and probably mediate the attachment of the 5S RNA into the large ribosomal subunit, where it forms part of the central protuberance. In Azoarcus sp. (strain BH72), this protein is Large ribosomal subunit protein uL18.